The primary structure comprises 49 residues: Putative exported peptide YydF (49 aa).

Its function is as follows. Suggested to be the precursor for an exported, modified peptide that has antimicrobial and/or signaling properties. Synthesis requires YydG and YydH; the peptide is proposed to be exported by the YydIJ transporter. In the absence of the transporter, the modified peptide activates the LiaRS two-component regulatory system, possibly by eliciting cell envelope stress. This activation can occur in trans in cocultured cells lacking either the transporter or the whole operon. The polypeptide is Putative exported peptide YydF (yydF) (Bacillus subtilis (strain 168)).